The chain runs to 452 residues: Mitochondrial distribution and morphology protein 34 (452 aa).

The SMP-LTD domain maps to 1–196 (MSFRVKGWSD…LPSIIYKMSR (196 aa)).

The protein belongs to the MDM34 family. Component of the ER-mitochondria encounter structure (ERMES) or MDM complex, composed of mmm1, mdm10, mdm12 and mdm34.

The protein localises to the mitochondrion outer membrane. Its function is as follows. Component of the ERMES/MDM complex, which serves as a molecular tether to connect the endoplasmic reticulum (ER) and mitochondria. Components of this complex are involved in the control of mitochondrial shape and protein biogenesis, and function in nonvesicular lipid trafficking between the ER and mitochondria. Mdm34 is required for the interaction of the ER-resident membrane protein mmm1 and the outer mitochondrial membrane-resident beta-barrel protein mdm10. This is Mitochondrial distribution and morphology protein 34 from Schizosaccharomyces pombe (strain 972 / ATCC 24843) (Fission yeast).